A 201-amino-acid chain; its full sequence is Recombination protein RecR (201 aa).

The C4-type zinc finger occupies 57–72 (CADCRTFTEQEVCNIC). Residues 81–176 (GQICVVESPA…EASRIAHGVP (96 aa)) form the Toprim domain.

This sequence belongs to the RecR family.

Functionally, may play a role in DNA repair. It seems to be involved in an RecBC-independent recombinational process of DNA repair. It may act with RecF and RecO. The polypeptide is Recombination protein RecR (Escherichia coli O6:K15:H31 (strain 536 / UPEC)).